Consider the following 511-residue polypeptide: Histidine ammonia-lyase (511 aa).

A cross-link (5-imidazolinone (Ala-Gly)) is located at residues 143 to 145; the sequence is ASG. Ser-144 is modified (2,3-didehydroalanine (Ser)).

This sequence belongs to the PAL/histidase family. Post-translationally, contains an active site 4-methylidene-imidazol-5-one (MIO), which is formed autocatalytically by cyclization and dehydration of residues Ala-Ser-Gly.

Its subcellular location is the cytoplasm. It carries out the reaction L-histidine = trans-urocanate + NH4(+). Its pathway is amino-acid degradation; L-histidine degradation into L-glutamate; N-formimidoyl-L-glutamate from L-histidine: step 1/3. The protein is Histidine ammonia-lyase of Vibrio cholerae serotype O1 (strain ATCC 39315 / El Tor Inaba N16961).